We begin with the raw amino-acid sequence, 64 residues long: uncharacterized protein (64 aa).

Widely expressed; not found in breast.

This is an uncharacterized protein from Homo sapiens (Human).